The sequence spans 411 residues: LL-diaminopimelate aminotransferase (411 aa).

2 residues coordinate substrate: Y15 and G42. Pyridoxal 5'-phosphate contacts are provided by residues Y72, 108–109 (SK), Y132, N187, Y218, and 246–248 (SFS). Substrate contacts are provided by K109, Y132, and N187. At K249 the chain carries N6-(pyridoxal phosphate)lysine. Residues R257 and N292 each coordinate pyridoxal 5'-phosphate. Substrate contacts are provided by N292 and R388.

The protein belongs to the class-I pyridoxal-phosphate-dependent aminotransferase family. LL-diaminopimelate aminotransferase subfamily. In terms of assembly, homodimer. Pyridoxal 5'-phosphate is required as a cofactor.

It catalyses the reaction (2S,6S)-2,6-diaminopimelate + 2-oxoglutarate = (S)-2,3,4,5-tetrahydrodipicolinate + L-glutamate + H2O + H(+). Its pathway is amino-acid biosynthesis; L-lysine biosynthesis via DAP pathway; LL-2,6-diaminopimelate from (S)-tetrahydrodipicolinate (aminotransferase route): step 1/1. Involved in the synthesis of meso-diaminopimelate (m-DAP or DL-DAP), required for both lysine and peptidoglycan biosynthesis. Catalyzes the direct conversion of tetrahydrodipicolinate to LL-diaminopimelate. The sequence is that of LL-diaminopimelate aminotransferase from Gloeothece citriformis (strain PCC 7424) (Cyanothece sp. (strain PCC 7424)).